We begin with the raw amino-acid sequence, 306 residues long: Low density lipoprotein receptor adapter protein 1 (306 aa).

Met-1 bears the N-acetylmethionine mark. At Ser-14 the chain carries Phosphoserine. Residues 44 to 168 (GMVFSLKYLG…VAQAFKVAFE (125 aa)) enclose the PID domain. The tract at residues 178-204 (EKREKANQEGGDVPGTRRDSTPSLKTS) is disordered. Ser-197 and Ser-200 each carry phosphoserine. Residues 210 to 214 (LLDLE) carry the Clathrin box motif. Residues 247 to 274 (WELDDGLDEAFSRLAQSRTNPQVLDTGL) are AP-2 complex binding. The short motif at 255-264 (EAFSRLAQSR) is the [DE]-X(1,2)-F-X-X-[FL]-X-X-X-R motif element.

As to quaternary structure, interacts (via PID domain) with LDLR (via NPXY motifs). Binds to soluble clathrin trimers. Interacts with AP2B1; the interaction mediates the association with the AP-2 complex. Interacts with VLDLR. Interacts with LRP2.

It is found in the cytoplasm. Its function is as follows. Adapter protein (clathrin-associated sorting protein (CLASP)) required for efficient endocytosis of the LDL receptor (LDLR) in polarized cells such as hepatocytes and lymphocytes, but not in non-polarized cells (fibroblasts). May be required for LDL binding and internalization but not for receptor clustering in coated pits. May facilitate the endocytosis of LDLR and LDLR-LDL complexes from coated pits by stabilizing the interaction between the receptor and the structural components of the pits. May also be involved in the internalization of other LDLR family members. Binds to phosphoinositides, which regulate clathrin bud assembly at the cell surface. Required for trafficking of LRP2 to the endocytic recycling compartment which is necessary for LRP2 proteolysis, releasing a tail fragment which translocates to the nucleus and mediates transcriptional repression. The chain is Low density lipoprotein receptor adapter protein 1 from Rattus norvegicus (Rat).